A 495-amino-acid chain; its full sequence is Leucine aminopeptidase 2 (495 aa).

Positions 1-21 are cleaved as a signal peptide; the sequence is MKSQLLSLAVAVSTISQGVVG. One can recognise a PA domain in the interval 124–218; it reads PPANKIMAEL…EDGKNLASLV (95 aa). N-linked (GlcNAc...) asparagine glycosylation is found at Asn142 and Asn235. Residues His259 and Asp271 each coordinate Zn(2+). N-linked (GlcNAc...) asparagine glycosylation occurs at Asn272. Glu303 acts as the Proton acceptor in catalysis. 2 residues coordinate Zn(2+): Glu304 and Asp332. Residue Asn352 is glycosylated (N-linked (GlcNAc...) asparagine). Zn(2+) is bound at residue His430.

The protein belongs to the peptidase M28 family. M28A subfamily. Monomer. Zn(2+) serves as cofactor.

The protein resides in the secreted. In terms of biological role, extracellular aminopeptidase that releases a wide variety of amino acids from natural peptides and contributes to pathogenicity. The sequence is that of Leucine aminopeptidase 2 (LAP2) from Trichophyton tonsurans (Scalp ringworm fungus).